The following is a 531-amino-acid chain: 2-isopropylmalate synthase (531 aa).

A Pyruvate carboxyltransferase domain is found at 8–284; the sequence is IIIFDTTLRD…LTNIDTKQIY (277 aa). Mn(2+) contacts are provided by D17, H208, H210, and N244. The regulatory domain stretch occupies residues 408 to 531; it reads RVELVQVSCG…TQDKQTEVTA (124 aa).

The protein belongs to the alpha-IPM synthase/homocitrate synthase family. LeuA type 1 subfamily. In terms of assembly, homodimer. Mn(2+) is required as a cofactor.

Its subcellular location is the cytoplasm. The enzyme catalyses 3-methyl-2-oxobutanoate + acetyl-CoA + H2O = (2S)-2-isopropylmalate + CoA + H(+). Its pathway is amino-acid biosynthesis; L-leucine biosynthesis; L-leucine from 3-methyl-2-oxobutanoate: step 1/4. In terms of biological role, catalyzes the condensation of the acetyl group of acetyl-CoA with 3-methyl-2-oxobutanoate (2-ketoisovalerate) to form 3-carboxy-3-hydroxy-4-methylpentanoate (2-isopropylmalate). This chain is 2-isopropylmalate synthase, found in Trichormus variabilis (strain ATCC 29413 / PCC 7937) (Anabaena variabilis).